A 380-amino-acid chain; its full sequence is Erythronate-4-phosphate dehydrogenase (380 aa).

2 residues coordinate substrate: S45 and T66. C65 and C90 are oxidised to a cystine. NAD(+) is bound by residues Q126–V127, D146, T175, A206–R208, and D232. The active site involves R208. Residue E237 is part of the active site. The active-site Proton donor is the H254. Residue G257 coordinates NAD(+). Position 258 (Y258) interacts with substrate.

Belongs to the D-isomer specific 2-hydroxyacid dehydrogenase family. PdxB subfamily. Homodimer.

The protein localises to the cytoplasm. It carries out the reaction 4-phospho-D-erythronate + NAD(+) = (R)-3-hydroxy-2-oxo-4-phosphooxybutanoate + NADH + H(+). It participates in cofactor biosynthesis; pyridoxine 5'-phosphate biosynthesis; pyridoxine 5'-phosphate from D-erythrose 4-phosphate: step 2/5. Functionally, catalyzes the oxidation of erythronate-4-phosphate to 3-hydroxy-2-oxo-4-phosphonooxybutanoate. This Pseudomonas aeruginosa (strain ATCC 15692 / DSM 22644 / CIP 104116 / JCM 14847 / LMG 12228 / 1C / PRS 101 / PAO1) protein is Erythronate-4-phosphate dehydrogenase.